We begin with the raw amino-acid sequence, 802 residues long: Potassium channel AKT2/3 (802 aa).

Over 1–79 (MDLKYSASHC…PMDSRYRCWE (79 aa)) the chain is Cytoplasmic. A helical transmembrane segment spans residues 80-100 (FYMVLLVAYSAWVYPFEVAFL). At 101–109 (NSSPKRNLC) the chain is on the extracellular side. A helical transmembrane segment spans residues 110 to 130 (IADNIVDLFFAVDIVLTFFVA). Topologically, residues 131 to 153 (YIDERTQLLVREPKQIAVRYLST) are cytoplasmic. A helical membrane pass occupies residues 154-174 (WFLMDVASTIPFDAIGYLITG). Topologically, residues 175–183 (TSTLNITCN) are extracellular. The N-linked (GlcNAc...) asparagine glycan is linked to asparagine 179. The chain crosses the membrane as a helical; Voltage-sensor span at residues 184-204 (LLGLLRFWRLRRVKHLFTRLE). Residues 205-218 (KDIRYSYFWIRCFR) lie on the Cytoplasmic side of the membrane. A helical membrane pass occupies residues 219-239 (LLSVTLFLVHCAGCSYYLIAD). Topologically, residues 240–265 (RYPHQGKTWTDAIPNFTETSLSIRYI) are extracellular. An N-linked (GlcNAc...) asparagine glycan is attached at asparagine 254. Residues 266 to 285 (AAIYWSITTMTTVGYGDLHA) constitute an intramembrane region (pore-forming). Over 286 to 288 (SNT) the chain is Extracellular. A helical transmembrane segment spans residues 289–309 (IEMVFITVYMLFNLGLTAYLI). Residues 310–802 (GNMTNLVVEG…KLYFVVNKII (493 aa)) are Cytoplasmic-facing. Position 394–513 (394–513 (LFKGVSREIL…ATMLKNFLQH (120 aa))) interacts with a nucleoside 3',5'-cyclic phosphate. ANK repeat units follow at residues 540 to 569 (NIAS…SPDI), 573 to 602 (KGKT…NIHI), 606 to 636 (NGNS…SDPH), 637 to 666 (IAGD…NVDT), and 670 to 699 (HGVT…DVVC). The 78-residue stretch at 725-802 (RVSIYRGHPL…KLYFVVNKII (78 aa)) folds into the KHA domain.

It belongs to the potassium channel family. Plant (TC 1.A.1.4) subfamily. As to quaternary structure, the potassium channel is probably composed of a homo- or heterotetrameric complex of pore-forming subunits. Interacts with the phosphatase PPC2A and the kinase CIPK6. May interact with AKT1, KAT1 and KAT3. Interacts with SLAC1. Dephosphorylated by PP2CA. Expressed mainly in the phloem tissues throughout the plant but also, at a lower level, in leaf epiderm, mesophyll and guard cells.

It localises to the endoplasmic reticulum membrane. In terms of biological role, highly selective and weak inward-rectifying potassium channel. Plays a role in both loading and unloading potassium into/from the phloem sap. Seems to control sugar loading into phloem via a voltage-dependent process. Blocked by physiological concentrations of external calcium and by external acidification. May interact with the cytoskeleton or with regulatory proteins. Dephosphorylation by PP2CA not only leads to the inhibition of potassium currents but also to an increase of the voltage-dependence of the channel. Regulated by the CBL4/CIPK6 calcium sensor/protein kinase complex via a kinase interaction-dependent but phosphorylation-independent translocation of the channel to the plasma membrane. This is Potassium channel AKT2/3 (AKT2) from Arabidopsis thaliana (Mouse-ear cress).